A 231-amino-acid polypeptide reads, in one-letter code: 5'-methylthioadenosine/S-adenosylhomocysteine nucleosidase (231 aa).

Glutamate 12 (proton acceptor) is an active-site residue. Substrate contacts are provided by residues glycine 78, methionine 153, and 174–175; that span reads ME. Aspartate 198 serves as the catalytic Proton donor.

This sequence belongs to the PNP/UDP phosphorylase family. MtnN subfamily.

It carries out the reaction S-adenosyl-L-homocysteine + H2O = S-(5-deoxy-D-ribos-5-yl)-L-homocysteine + adenine. The catalysed reaction is S-methyl-5'-thioadenosine + H2O = 5-(methylsulfanyl)-D-ribose + adenine. It catalyses the reaction 5'-deoxyadenosine + H2O = 5-deoxy-D-ribose + adenine. Its pathway is amino-acid biosynthesis; L-methionine biosynthesis via salvage pathway; S-methyl-5-thio-alpha-D-ribose 1-phosphate from S-methyl-5'-thioadenosine (hydrolase route): step 1/2. Its function is as follows. Catalyzes the irreversible cleavage of the glycosidic bond in both 5'-methylthioadenosine (MTA) and S-adenosylhomocysteine (SAH/AdoHcy) to adenine and the corresponding thioribose, 5'-methylthioribose and S-ribosylhomocysteine, respectively. Also cleaves 5'-deoxyadenosine, a toxic by-product of radical S-adenosylmethionine (SAM) enzymes, into 5-deoxyribose and adenine. The polypeptide is 5'-methylthioadenosine/S-adenosylhomocysteine nucleosidase (Bacillus cereus (strain B4264)).